A 222-amino-acid chain; its full sequence is MNSKLNSAMYSAHMIMRHAFGYNDYNNKYGRINDVYNKMADGKRLRLEEREVKSLRGLVCTLKMMIKNTDIITYDEECCICMAKNNRKEALPCQHNVCRDCYYKPMRNNCPVCNMEWPMRKDDKHAAPYGLAEYAHTYGGEEQRTPSPPVLGTVEGGDISPRLVGAIRTNDTWLSSRRDSPYHIENRIHNNNNNNYDENNPDDLPVIHPPRRRHRQTAHISI.

The RING-type zinc-finger motif lies at Cys78–Asn114. Residues Ile184–Ile222 form a disordered region. Positions His189–Glu198 are enriched in low complexity. Over residues Pro209 to Ile222 the composition is skewed to basic residues.

This chain is Putative RING finger protein ORF118, found in Magallana gigas (Pacific oyster).